The primary structure comprises 151 residues: Ribonuclease H (151 aa).

One can recognise an RNase H type-1 domain in the interval 1 to 141 (MKHVDIFTDG…ADELARKGME (141 aa)). Mg(2+) is bound by residues Asp9, Glu47, Asp69, and Asp133.

This sequence belongs to the RNase H family. As to quaternary structure, monomer. It depends on Mg(2+) as a cofactor.

The protein resides in the cytoplasm. It catalyses the reaction Endonucleolytic cleavage to 5'-phosphomonoester.. In terms of biological role, endonuclease that specifically degrades the RNA of RNA-DNA hybrids. In Rhizobium johnstonii (strain DSM 114642 / LMG 32736 / 3841) (Rhizobium leguminosarum bv. viciae), this protein is Ribonuclease H.